The primary structure comprises 178 residues: MSDVQTPFQLLVDIDQRCRRLAAGLPAQQEAVQSWSGIGFRMGGRFFVAPMGEVGEVLHEPRYTQLPGVKTWVKGVANVRGRLLPIMDLCGFLGTELSPLRKQRRVLVVEHLDVFAGLIVDEVFGMQHFPVDTFSEQLPPLEAALQPFIHGVFHREQPWLVFSPHALAQHQGFLDVAV.

A CheW-like domain is found at 34-173 (SWSGIGFRMG…PHALAQHQGF (140 aa)).

May be a part of a signal-transduction system that regulates twitching motility by controlling pilus function (extension and retraction). The polypeptide is Protein PilI (pilI) (Pseudomonas aeruginosa (strain ATCC 15692 / DSM 22644 / CIP 104116 / JCM 14847 / LMG 12228 / 1C / PRS 101 / PAO1)).